The following is a 428-amino-acid chain: Cytokine-dependent hematopoietic cell linker (428 aa).

The interval 1 to 22 (MNRQGNRKTTKEGSNDLKFQNF) is disordered. Residues tyrosine 69 and tyrosine 96 each carry the phosphotyrosine; by LYN modification. 2 disordered regions span residues 135–198 (DKPI…EVQR) and 244–271 (SSSF…PQRC). The tract at residues 159 to 164 (PLPPPR) is mediates interaction with PLCG1; essential for BCR signaling; involved in restoration of BCR-induced calcium response and ERK2 and JNK2 activation in BLNK-deficient cells expressing LAT. A mediates interaction with LAT, GRB2, and FGR; involved in translocation to the glycolipid-enriched microdomain and restoration of BCR-induced calcium response in BLNK-deficient DT40 cells expressing LAT region spans residues 178–180 (PEP). The span at 244–253 (SSSFTTSNHS) shows a compositional bias: low complexity. The region spanning 309–419 (WYIGEYSRQA…RKQCHLTQPL (111 aa)) is the SH2 domain.

In terms of assembly, when phosphorylated, interacts with PLCG1, PLCG2, GRB2, VAV and LAT. Interacts with LBR and AGO2. Interacts with FGR. Part of a complex consisting of CLNK, SKAP1 and FYB1. Interacts (via SH2 domain) with FYB1; this interaction allows SKAP1 and FYB1 to promote tyrosine phosphorylation of CLNK by LYN. Interacts (via SH2 domain) with MAP4K1. In terms of processing, tyrosine-phosphorylated upon BCR cross-linking. Tyrosine phosphorylation at both Tyr-69 and Tyr-96 are required for BCR-induced calcium response and are essential to restore PLCG2-mediated signaling in BLNK-deficient DT40 cells, but this phosphorylation is dispensable in cells expressing LAT. Interacts with the SH2 domain of PLCG1 via phosphorylated Tyr-96. Tyrosine phosphorylation is increased when complexed with SKAP1 and FYB1.

The protein resides in the cytoplasm. Functionally, an adapter protein which plays a role in the regulation of immunoreceptor signaling, including PLC-gamma-mediated B-cell antigen receptor (BCR) signaling and FC-epsilon R1-mediated mast cell degranulation. Together with FGR, it acts as a negative regulator of natural killer cell-activating receptors and inhibits interferon-gamma production. Acts as a positive regulator of both T-cell receptor and natural killer T (NKT) cell receptor signaling in CD4-positive NKT cells. Together with MAP4K1, it enhances CD3-triggered activation of T-cells and subsequent IL2 production. May be involved in tumor necrosis factor induced cell death by promoting reactive oxidative species generation, and MLKL oligomerization, ultimately leading to necrosis. Involved in phosphorylation of LAT. May be involved in high affinity immunoglobulin epsilon receptor signaling in mast cells. This is Cytokine-dependent hematopoietic cell linker (CLNK) from Homo sapiens (Human).